A 70-amino-acid chain; its full sequence is Basic phospholipase A2 2 (70 aa).

Cysteine 28 and cysteine 44 are joined by a disulfide. Histidine 47 is a catalytic residue. Aspartate 48 contacts Ca(2+).

The protein belongs to the phospholipase A2 family. Group II subfamily. D49 sub-subfamily. Requires Ca(2+) as cofactor. As to expression, expressed by the venom gland.

Its subcellular location is the secreted. It carries out the reaction a 1,2-diacyl-sn-glycero-3-phosphocholine + H2O = a 1-acyl-sn-glycero-3-phosphocholine + a fatty acid + H(+). In terms of biological role, snake venom phospholipase A2 (PLA2) that exhibits strong myotoxicity. PLA2 catalyzes the calcium-dependent hydrolysis of the 2-acyl groups in 3-sn-phosphoglycerides. The polypeptide is Basic phospholipase A2 2 (Trimeresurus stejnegeri (Chinese green tree viper)).